A 208-amino-acid polypeptide reads, in one-letter code: MLAKDSLSWVVTVVTLTGIFLTAAVLTGIDLVWYLFYMSLFLTFFVIWFFRDPDRTTRICDHCMFSAADGKVMDVSGRRVCVFMNVHNVHVNRTPISGVVKSITHKKGGYLPAFHKDSERNERTVTVIKSSHGEVNVTQIAGVMVRRIVSYINVGDELVNGEKIGMIRFGSRVDVTIPDDFDIACKVGDRVYAGETVIAKKKNFKVRK.

Serine 171 functions as the Schiff-base intermediate with substrate; via pyruvic acid in the catalytic mechanism. Serine 171 is modified (pyruvic acid (Ser); by autocatalysis).

The protein belongs to the phosphatidylserine decarboxylase family. PSD-A subfamily. As to quaternary structure, heterodimer of a large membrane-associated beta subunit and a small pyruvoyl-containing alpha subunit. The cofactor is pyruvate. Post-translationally, is synthesized initially as an inactive proenzyme. Formation of the active enzyme involves a self-maturation process in which the active site pyruvoyl group is generated from an internal serine residue via an autocatalytic post-translational modification. Two non-identical subunits are generated from the proenzyme in this reaction, and the pyruvate is formed at the N-terminus of the alpha chain, which is derived from the carboxyl end of the proenzyme. The post-translation cleavage follows an unusual pathway, termed non-hydrolytic serinolysis, in which the side chain hydroxyl group of the serine supplies its oxygen atom to form the C-terminus of the beta chain, while the remainder of the serine residue undergoes an oxidative deamination to produce ammonia and the pyruvoyl prosthetic group on the alpha chain.

Its subcellular location is the cell membrane. The enzyme catalyses archaetidylserine + H(+) = archaetidylethanolamine + CO2. Its function is as follows. Catalyzes the formation of archaetidylethanolamine (PtdEtn) from archaetidylserine (PtdSer). This chain is Putative archaetidylserine decarboxylase proenzyme, found in Methanococcoides burtonii (strain DSM 6242 / NBRC 107633 / OCM 468 / ACE-M).